The chain runs to 380 residues: uncharacterized protein (380 aa).

The first 18 residues, 1 to 18 (MALRHLALLAGLLVGVAS), serve as a signal peptide directing secretion. Residues Asn-104, Asn-111, and Asn-128 are each glycosylated (N-linked (GlcNAc...) asparagine). Residues 148-168 (LFLGTFFISSGLILSVAGFFY) traverse the membrane as a helical segment. 2 disordered regions span residues 229–256 (PQTG…QGQG) and 336–380 (RFSG…ISNV). A compositionally biased stretch (pro residues) spans 240–249 (PPLPGSPGDP). Over residues 356–366 (VRRERPLDRAT) the composition is skewed to basic and acidic residues.

Its subcellular location is the membrane. This is an uncharacterized protein from Homo sapiens (Human).